The sequence spans 456 residues: Phospholipase A1 member A (456 aa).

The first 25 residues, 1-25 (MPPGPWESCFWVGGLLLWLSVGSSG), serve as a signal peptide directing secretion. Ser-166 (nucleophile) is an active-site residue. The Charge relay system role is filled by Asp-190. A disulfide bond links Cys-245 and Cys-258. The active-site Charge relay system is His-260. 2 disulfide bridges follow: Cys-282–Cys-293 and Cys-296–Cys-304. An N-linked (GlcNAc...) asparagine glycan is attached at Asn-365.

Belongs to the AB hydrolase superfamily. Lipase family.

It is found in the secreted. It carries out the reaction a 1,2-diacyl-sn-glycero-3-phospho-L-serine + H2O = a 2-acyl-sn-glycero-3-phospho-L-serine + a fatty acid + H(+). It catalyses the reaction 1,2-di-(9Z)-octadecenoyl-sn-glycero-3-phospho-L-serine + H2O = 2-(9Z-octadecenoyl)-sn-glycero-3-phospho-L-serine + (9Z)-octadecenoate + H(+). The catalysed reaction is 1-hexadecanoyl-2-(5Z,8Z,11Z,14Z-eicosatetraenoyl)-sn-glycero-3-phospho-L-serine + H2O = 2-(5Z,8Z,11Z,14Z)-eicosatetraenoyl-sn-glycero-3-phospho-L-serine + hexadecanoate + H(+). The enzyme catalyses a 1-acyl-sn-glycero-3-phospho-L-serine + H2O = sn-glycero-3-phospho-L-serine + a fatty acid + H(+). It carries out the reaction 1-(9Z-octadecenoyl)-sn-glycero-3-phospho-L-serine + H2O = sn-glycero-3-phospho-L-serine + (9Z)-octadecenoate + H(+). In terms of biological role, hydrolyzes the ester bond of the acyl group attached at the sn-1 position of phosphatidylserines (phospholipase A1 activity) and 1-acyl-2-lysophosphatidylserines (lysophospholipase activity) in the pathway of phosphatidylserines acyl chain remodeling. Cleaves phosphatidylserines exposed on the outer leaflet of the plasma membrane of apoptotic cells producing 2-acyl-1-lysophosphatidylserines, which in turn enhance mast cell activation and histamine production. Has no activity toward other glycerophospholipids including phosphatidylcholines, phosphatidylethanolamines, phosphatidic acids or phosphatidylinositols, or glycerolipids such as triolein. This chain is Phospholipase A1 member A (PLA1A), found in Pongo abelii (Sumatran orangutan).